A 187-amino-acid chain; its full sequence is uncharacterized protein (187 aa).

The HTH tetR-type domain occupies 6-66 (TDLAEQIFSA…QFAHRVFSMF (61 aa)). Positions 29–48 (SMLKLAKEANVAAGTIYLYF) form a DNA-binding region, H-T-H motif.

This is an uncharacterized protein from Haemophilus influenzae (strain ATCC 51907 / DSM 11121 / KW20 / Rd).